The following is a 343-amino-acid chain: Ribosomal RNA small subunit methyltransferase C (343 aa).

The protein belongs to the methyltransferase superfamily. RsmC family. As to quaternary structure, monomer.

The protein resides in the cytoplasm. It carries out the reaction guanosine(1207) in 16S rRNA + S-adenosyl-L-methionine = N(2)-methylguanosine(1207) in 16S rRNA + S-adenosyl-L-homocysteine + H(+). Its function is as follows. Specifically methylates the guanine in position 1207 of 16S rRNA in the 30S particle. The protein is Ribosomal RNA small subunit methyltransferase C of Shigella flexneri serotype 5b (strain 8401).